Here is a 143-residue protein sequence, read N- to C-terminus: MSIIQEFKEFAIKGNMMDLAIGVIIGGAFGKIVDSLVKDIIMPLITVITGGGVDFSQKFIVLGANPNNLQSLDALQKAGINVLTYGNFLTILINFLILAWVVFLMVKLLNKLRRDKNEPEAPAATPEDIQLLREIRDELKKQA.

Helical transmembrane passes span 10–30 (FAIK…GAFG), 40–60 (IIMP…QKFI), and 86–106 (GNFL…FLMV).

It belongs to the MscL family. Homopentamer.

The protein resides in the cell inner membrane. Channel that opens in response to stretch forces in the membrane lipid bilayer. May participate in the regulation of osmotic pressure changes within the cell. The protein is Large-conductance mechanosensitive channel of Acinetobacter baumannii (strain ATCC 17978 / DSM 105126 / CIP 53.77 / LMG 1025 / NCDC KC755 / 5377).